A 647-amino-acid polypeptide reads, in one-letter code: Threonine--tRNA ligase (647 aa).

A TGS domain is found at 1–61; that stretch reads MINITFPDGA…TEDGSIEIVT (61 aa). A catalytic region spans residues 242-540; the sequence is DHRKLGKELD…LIENYKGAFP (299 aa). C336, H387, and H517 together coordinate Zn(2+).

Belongs to the class-II aminoacyl-tRNA synthetase family. In terms of assembly, homodimer. Zn(2+) serves as cofactor.

Its subcellular location is the cytoplasm. The enzyme catalyses tRNA(Thr) + L-threonine + ATP = L-threonyl-tRNA(Thr) + AMP + diphosphate + H(+). Its function is as follows. Catalyzes the attachment of threonine to tRNA(Thr) in a two-step reaction: L-threonine is first activated by ATP to form Thr-AMP and then transferred to the acceptor end of tRNA(Thr). Also edits incorrectly charged L-seryl-tRNA(Thr). In Streptococcus pneumoniae (strain JJA), this protein is Threonine--tRNA ligase.